Consider the following 595-residue polypeptide: E3 ubiquitin-protein ligase synoviolin B (595 aa).

A helical transmembrane segment spans residues 1 to 19 (MTGASLALTASVVAHAYYL). At 20 to 35 (KNQFYPTVVYLTKSSP) the chain is on the lumenal side. Residues 36–56 (SMAILYIQAFVLVFLLGKFMG) traverse the membrane as a helical segment. Residues 57–92 (KVFFGQLRAAEMEHLLERSWYAVTETCLAFTVFRDD) are Cytoplasmic-facing. A helical membrane pass occupies residues 93–113 (FSPRFVALFTLLLFLKCFHWL). Over 114–129 (AEDRVDFMERSPNISW) the chain is Lumenal. Residues 130–150 (LFHFRILALMLLLGVLDAFFV) form a helical membrane-spanning segment. The Cytoplasmic segment spans residues 151-163 (SHAYNSLVTRGAS). Residues 164–184 (VQLVFGFEYAILMTMILAVFI) traverse the membrane as a helical segment. Residues 185-218 (KYILHSVDLQSENPWDNKAVYMLYTELFTGFIKV) are Lumenal-facing. Residues 219-239 (LLYMAFMTIMVKVHTFPLFAI) form a helical membrane-spanning segment. Residues 230–264 (KVHTFPLFAIRPMYLAMRQFKKAVTDAVMSRRAIR) form an interaction with p53/TP53 region. At 240-595 (RPMYLAMRQF…LQKLETTDSQ (356 aa)) the chain is on the cytoplasmic side. Zn(2+) contacts are provided by C285, C288, C301, H303, H306, C309, C320, and C323. Residues 285 to 324 (CIICREEMVSGAKRLPCNHIFHTSCLRSWFQRQQTCPTCR) form an RING-type; atypical zinc finger. The segment covering 335-353 (QPQTPAEQQNQHQAQQQPT) has biased composition (low complexity). Disordered regions lie at residues 335-370 (QPQT…LPPF) and 386-426 (PVPG…PGAA). A compositionally biased stretch (pro residues) spans 354-370 (PVVPPQPNFPPGMLPPF). Over residues 390 to 408 (APVGNPPDEANPGSSSGSS) the composition is skewed to low complexity. A coiled-coil region spans residues 463-494 (EELRAMEGHERQNLEARLQCLQNIHTLLDAAM). Residues 509–595 (PPQPPVSSSS…LQKLETTDSQ (87 aa)) form a disordered region. Low complexity predominate over residues 514 to 552 (VSSSSSSSASASTEPTTSSVSEPVIDTSSIVTTDSSQQS).

This sequence belongs to the HRD1 family. Homodimer.

It is found in the endoplasmic reticulum membrane. The catalysed reaction is S-ubiquitinyl-[E2 ubiquitin-conjugating enzyme]-L-cysteine + [acceptor protein]-L-lysine = [E2 ubiquitin-conjugating enzyme]-L-cysteine + N(6)-ubiquitinyl-[acceptor protein]-L-lysine.. It participates in protein modification; protein ubiquitination. Functionally, E3 ubiquitin-protein ligase which accepts ubiquitin specifically from endoplasmic reticulum-associated UBC7 E2 ligase and transfers it to substrates, promoting their degradation. Component of the endoplasmic reticulum quality control (ERQC) system also called ER-associated degradation (ERAD) involved in ubiquitin-dependent degradation of misfolded endoplasmic reticulum proteins. Also promotes the degradation of normal but naturally short-lived proteins. Protects cells from ER stress-induced apoptosis. Sequesters p53 in the cytoplasm and promotes its degradation, thereby negatively regulating its biological function in transcription, cell cycle regulation and apoptosis. The polypeptide is E3 ubiquitin-protein ligase synoviolin B (syvn1-b) (Xenopus laevis (African clawed frog)).